The primary structure comprises 456 residues: Arginine biosynthesis bifunctional protein ArgJ, mitochondrial (456 aa).

The substrate site is built by Thr-184, Lys-213, Thr-224, Glu-311, Asn-451, and Thr-456. Thr-224 functions as the Nucleophile in the catalytic mechanism.

The protein belongs to the ArgJ family. Heterodimer of an alpha and a beta chain. The alpha and beta chains are autoproteolytically processed from a single precursor protein within the mitochondrion.

It is found in the mitochondrion matrix. The catalysed reaction is N(2)-acetyl-L-ornithine + L-glutamate = N-acetyl-L-glutamate + L-ornithine. It catalyses the reaction L-glutamate + acetyl-CoA = N-acetyl-L-glutamate + CoA + H(+). The protein operates within amino-acid biosynthesis; L-arginine biosynthesis; L-ornithine and N-acetyl-L-glutamate from L-glutamate and N(2)-acetyl-L-ornithine (cyclic): step 1/1. Its pathway is amino-acid biosynthesis; L-arginine biosynthesis; N(2)-acetyl-L-ornithine from L-glutamate: step 1/4. Functionally, catalyzes two activities which are involved in the cyclic version of arginine biosynthesis: the synthesis of acetylglutamate from glutamate and acetyl-CoA, and of ornithine by transacetylation between acetylornithine and glutamate. This chain is Arginine biosynthesis bifunctional protein ArgJ, mitochondrial, found in Aspergillus niger (strain ATCC MYA-4892 / CBS 513.88 / FGSC A1513).